Reading from the N-terminus, the 296-residue chain is Chronophin (296 aa).

Aspartate 25 acts as the Nucleophile in catalysis. Aspartate 25 and aspartate 27 together coordinate Mg(2+). The Proton donor role is filled by aspartate 27. Substrate is bound by residues 58–60, histidine 182, and lysine 213; that span reads SNN. Aspartate 238 provides a ligand contact to Mg(2+).

This sequence belongs to the HAD-like hydrolase superfamily. As to quaternary structure, homodimer. Requires Mg(2+) as cofactor. Ubiquitously expressed (at protein level). Highly expressed in all the regions of central nerve system except the spinal cord. Also expressed at high level in liver and testis. In fetus, it is weakly expressed in all organs except brain.

It is found in the cytoplasm. It localises to the cytosol. The protein resides in the cytoskeleton. Its subcellular location is the cell projection. The protein localises to the ruffle membrane. It is found in the lamellipodium membrane. It localises to the cell membrane. It catalyses the reaction pyridoxal 5'-phosphate + H2O = pyridoxal + phosphate. The catalysed reaction is pyridoxine 5'-phosphate + H2O = pyridoxine + phosphate. It carries out the reaction pyridoxamine + phosphate = pyridoxamine 5'-phosphate + H2O. The enzyme catalyses O-phospho-L-seryl-[protein] + H2O = L-seryl-[protein] + phosphate. With respect to regulation, inhibited by NaF, Zn(2+), Ca(2+), Mn(2+) and EDTA. Its function is as follows. Functions as a pyridoxal phosphate (PLP) phosphatase, which also catalyzes the dephosphorylation of pyridoxine 5'-phosphate (PNP) and pyridoxamine 5'-phosphate (PMP), with order of substrate preference PLP &gt; PNP &gt; PMP and therefore plays a role in vitamin B6 metabolism. Also functions as a protein serine phosphatase that specifically dephosphorylates 'Ser-3' in proteins of the actin-depolymerizing factor (ADF)/cofilin family like CFL1 and DSTN. Thereby, regulates cofilin-dependent actin cytoskeleton reorganization, being required for normal progress through mitosis and normal cytokinesis. Does not dephosphorylate phosphothreonines in LIMK1. Does not dephosphorylate peptides containing phosphotyrosine. This chain is Chronophin, found in Homo sapiens (Human).